A 55-amino-acid polypeptide reads, in one-letter code: MNKFIKVALVGAVLATLTACTGHIENRDKNCSYDYLLHPAISISKIIGGCGPTAQ.

Residues 7-24 form a helical membrane-spanning segment; sequence VALVGAVLATLTACTGHI.

It localises to the membrane. This is an uncharacterized protein from Escherichia coli O157:H7.